A 611-amino-acid chain; its full sequence is Sensor histidine kinase WalK (611 aa).

Residues 1–13 (MNKVGFFRSIQFK) lie on the Cytoplasmic side of the membrane. A helical membrane pass occupies residues 14–34 (ITLIYVLLIIIAMQIIGVYFV). Over 35–182 (NQVEKSLISS…VFNQMKTINT (148 aa)) the chain is Extracellular. Residues 183 to 203 (ILASGTGLALVLTALLGIFLA) form a helical membrane-spanning segment. Residues 204–256 (RTITHPLSDMRKQAMELAKGNFSRKVKKYGHDEIGQLATTFNHLTRELEDAQA) enclose the HAMP domain. The Cytoplasmic segment spans residues 204–611 (RTITHPLSDM…EEQEDDWDEA (408 aa)). A PAS domain is found at 263–324 (RKLASVIAYM…QENYTFEDLV (62 aa)). A PAC domain is found at 325-379 (EQQDSMLLEIERDDELTVLRVNFSVIQREHGKIDGLIAVIYDVTEQEKMDQERRE). The Histidine kinase domain occupies 383–602 (NVSHELRTPL…TITFTLPYKE (220 aa)). A Phosphohistidine; by autocatalysis modification is found at His386.

In terms of assembly, homodimer. Interacts with YycH and YycI. Autophosphorylated.

It localises to the cell membrane. The catalysed reaction is ATP + protein L-histidine = ADP + protein N-phospho-L-histidine.. Functionally, member of the two-component regulatory system WalK/WalR involved in the regulation of the ftsAZ operon, the yocH and ykvT, cwlO, lytE, ydjM, yjeA, yoeB genes and the tagAB and tagDEF operons. Phosphorylates WalR. This chain is Sensor histidine kinase WalK, found in Bacillus subtilis (strain 168).